The primary structure comprises 91 residues: Small ribosomal subunit protein uS19m (91 aa).

Belongs to the universal ribosomal protein uS19 family. As to quaternary structure, component of the mitochondrial small ribosomal subunit (mt-SSU). Mature N.crassa 74S mitochondrial ribosomes consist of a small (37S) and a large (54S) subunit. The 37S small subunit contains a 16S ribosomal RNA (16S mt-rRNA) and 32 different proteins. The 54S large subunit contains a 23S rRNA (23S mt-rRNA) and 42 different proteins.

Its subcellular location is the mitochondrion. Functionally, component of the mitochondrial ribosome (mitoribosome), a dedicated translation machinery responsible for the synthesis of mitochondrial genome-encoded proteins, including at least some of the essential transmembrane subunits of the mitochondrial respiratory chain. The mitoribosomes are attached to the mitochondrial inner membrane and translation products are cotranslationally integrated into the membrane. The chain is Small ribosomal subunit protein uS19m (rsm19) from Neurospora crassa (strain ATCC 24698 / 74-OR23-1A / CBS 708.71 / DSM 1257 / FGSC 987).